A 185-amino-acid chain; its full sequence is MKNQEIIEVKSKMFLRIWAFVGSAGMGLACLWLFYMGITFQTKYYLLAIPAGFLFTLFCLYLFIIFFPAFTPRGNTIFRIKTGKNGEVFTDKVSVTFTDIKKIEMSRHKFSLKGIFQEDILIQTVDQKTIRIPTWNIIPNPLFFEAVERYILPHLNEEAKSNWIGQFTDIQRSAYLKEFENHPKL.

A signal peptide spans methionine 1 to alanine 29. Cysteine 30 is lipidated: N-palmitoyl cysteine. Cysteine 30 carries the S-diacylglycerol cysteine lipid modification. A helical membrane pass occupies residues tyrosine 45 to phenylalanine 67.

This sequence to B.subtilis YfjE.

The protein localises to the cell membrane. This is an uncharacterized protein from Bacillus subtilis (strain 168).